The following is a 195-amino-acid chain: Endoribonuclease YbeY (195 aa).

Zn(2+) contacts are provided by H152, H156, and H162.

It belongs to the endoribonuclease YbeY family. It depends on Zn(2+) as a cofactor.

It localises to the cytoplasm. Functionally, single strand-specific metallo-endoribonuclease involved in late-stage 70S ribosome quality control and in maturation of the 3' terminus of the 16S rRNA. The polypeptide is Endoribonuclease YbeY (Rhodopseudomonas palustris (strain BisB5)).